The primary structure comprises 444 residues: N-succinylarginine dihydrolase (444 aa).

Substrate contacts are provided by residues 19–28 (AGLSFGNVAS), Asn110, and 137–138 (HR). The active site involves Glu174. Residue Arg214 coordinates substrate. The active site involves His250. Substrate-binding residues include Asp252 and Asn362. The active-site Nucleophile is the Cys368.

Belongs to the succinylarginine dihydrolase family. Homodimer.

The enzyme catalyses N(2)-succinyl-L-arginine + 2 H2O + 2 H(+) = N(2)-succinyl-L-ornithine + 2 NH4(+) + CO2. It functions in the pathway amino-acid degradation; L-arginine degradation via AST pathway; L-glutamate and succinate from L-arginine: step 2/5. In terms of biological role, catalyzes the hydrolysis of N(2)-succinylarginine into N(2)-succinylornithine, ammonia and CO(2). The sequence is that of N-succinylarginine dihydrolase from Shewanella baltica (strain OS155 / ATCC BAA-1091).